The chain runs to 285 residues: E2F-associated phosphoprotein (285 aa).

N-acetylmethionine is present on M1. Residues 1–30 form a disordered region; it reads MNRLPDDYDPYAVEEPSDEEPALSSSEDEV. Residues 15–30 are compositionally biased toward acidic residues; the sequence is EPSDEEPALSSSEDEV. Residue S17 is modified to Phosphoserine. T37 bears the Phosphothreonine mark. Residues 48-96 form a disordered region; sequence CLTGESESSSEDEFEKEMEAELNSTMKTMEDKLSSLGTGSSSGNGKVAT. Residues 55–67 are compositionally biased toward acidic residues; sequence SSSEDEFEKEMEA. The span at 81–92 shows a compositional bias: low complexity; that stretch reads SSLGTGSSSGNG. 2 positions are modified to phosphoserine: S109 and S111. Residues 118–144 are disordered; sequence VQVTKKKKKKQHKIPTNDELLYDPEKD. A compositionally biased stretch (basic residues) spans 121–130; it reads TKKKKKKQHK.

As to quaternary structure, interacts with E2F1. The C-terminal half binds the N-terminal of E2F1. Also interacts with E2F2 and E2F3, but not E2F4. In terms of tissue distribution, ubiquitously expressed. Highest levels in heart, placenta, skeletal muscle and pancreas. Lower levels in brain, lung and kidney. In the brain, expressed in all regions with high levels in the cerebellum and cerebral cortex. Expressed in COS1 and transformed skin fibroblasts.

It is found in the cytoplasm. It localises to the nucleus. Its function is as follows. May play an important role in the fine-tuning of both major E2F1 activities, the regulation of the cell-cycle and the induction of apoptosis. Promotes S-phase entry, and inhibits p14(ARP) expression. This is E2F-associated phosphoprotein (EAPP) from Homo sapiens (Human).